Here is a 138-residue protein sequence, read N- to C-terminus: UPF0201 protein TK1335 (138 aa).

The protein belongs to the UPF0201 family.

The chain is UPF0201 protein TK1335 from Thermococcus kodakarensis (strain ATCC BAA-918 / JCM 12380 / KOD1) (Pyrococcus kodakaraensis (strain KOD1)).